Here is a 167-residue protein sequence, read N- to C-terminus: NAD(P)H-quinone oxidoreductase subunit I, chloroplastic (167 aa).

2 4Fe-4S ferredoxin-type domains span residues 55-84 (GRIH…VDWK) and 95-124 (LNYS…MTEE). [4Fe-4S] cluster-binding residues include C64, C67, C70, C74, C104, C107, C110, and C114.

It belongs to the complex I 23 kDa subunit family. NDH is composed of at least 16 different subunits, 5 of which are encoded in the nucleus. Requires [4Fe-4S] cluster as cofactor.

The protein resides in the plastid. Its subcellular location is the chloroplast thylakoid membrane. It carries out the reaction a plastoquinone + NADH + (n+1) H(+)(in) = a plastoquinol + NAD(+) + n H(+)(out). The catalysed reaction is a plastoquinone + NADPH + (n+1) H(+)(in) = a plastoquinol + NADP(+) + n H(+)(out). Functionally, NDH shuttles electrons from NAD(P)H:plastoquinone, via FMN and iron-sulfur (Fe-S) centers, to quinones in the photosynthetic chain and possibly in a chloroplast respiratory chain. The immediate electron acceptor for the enzyme in this species is believed to be plastoquinone. Couples the redox reaction to proton translocation, and thus conserves the redox energy in a proton gradient. The chain is NAD(P)H-quinone oxidoreductase subunit I, chloroplastic from Pelargonium hortorum (Common geranium).